A 1267-amino-acid chain; its full sequence is Probable ATP-dependent RNA helicase DHR1 (1267 aa).

Disordered stretches follow at residues 1 to 67 (MGTY…EPLT), 168 to 233 (YEPK…SNIK), and 255 to 313 (EELK…DQND). Basic and acidic residues-rich tracts occupy residues 7 to 25 (RFNE…ELKR) and 32 to 43 (TRQDENDERVEN). A compositionally biased stretch (acidic residues) spans 175–192 (EYGEGGSSEDDDGEDDFE). Position 181 is a phosphoserine (Ser-181). Residues 202-217 (TDNEEKKSSGFIDHRP) are compositionally biased toward basic and acidic residues. Residues 264-284 (DEMDFDTTSEDDDEEEDQEEE) are compositionally biased toward acidic residues. Residues 401–580 (MEAIHHNDVV…KTLFPIAPPV (180 aa)) form the Helicase ATP-binding domain. Residue 414–421 (GETGSGKT) participates in ATP binding. Positions 516–519 (DEAH) match the DEAH box motif. The Helicase C-terminal domain occupies 675–858 (DIDFSVQVID…SIVLQMKSMA (184 aa)). Disordered regions lie at residues 693–720 (RYEE…EVLT) and 955–976 (PNPD…PGMD). Over residues 695 to 719 (EEDEGNSGNGEDEEDEEEEGFEEVL) the composition is skewed to acidic residues.

The protein belongs to the DEAD box helicase family. DEAH subfamily. As to quaternary structure, interacts with snoRNA U3. Component of the ribosomal small subunit (SSU) processome composed of at least 40 protein subunits and snoRNA U3.

It is found in the nucleus. The protein resides in the nucleolus. It catalyses the reaction ATP + H2O = ADP + phosphate + H(+). Probable ATP-binding RNA helicase. Required for 18S rRNA synthesis. May play a role in restructuring of the pre-rRNA. The chain is Probable ATP-dependent RNA helicase DHR1 (ECM16) from Saccharomyces cerevisiae (strain ATCC 204508 / S288c) (Baker's yeast).